We begin with the raw amino-acid sequence, 324 residues long: tRNA pseudouridine synthase B (324 aa).

The active-site Nucleophile is the Asp-49. The disordered stretch occupies residues 87–107 (RSTDDLEGQPTKTSDKRPSRE).

This sequence belongs to the pseudouridine synthase TruB family. Type 1 subfamily.

The enzyme catalyses uridine(55) in tRNA = pseudouridine(55) in tRNA. Functionally, responsible for synthesis of pseudouridine from uracil-55 in the psi GC loop of transfer RNAs. The sequence is that of tRNA pseudouridine synthase B from Brucella canis (strain ATCC 23365 / NCTC 10854 / RM-666).